Here is a 560-residue protein sequence, read N- to C-terminus: Trans-activating transcriptional regulatory protein (560 aa).

A disordered region spans residues 106–133 (DSMKRKASELDSDSDSGESSKGKKRVIK).

Belongs to the nucleopolyhedrovirus IE-1 protein family.

Its function is as follows. Regulatory transcriptional protein, which trans-activates gene expression from early baculovirus promoters. Can also trans-activate its own promoter, suggesting that it is autoregulated during normal infection of insect cells. This chain is Trans-activating transcriptional regulatory protein (IE1), found in Choristoneura fumiferana nuclear polyhedrosis virus (CfMNPV).